Here is a 122-residue protein sequence, read N- to C-terminus: Glycine cleavage system H protein (122 aa).

The Lipoyl-binding domain occupies 19 to 101; that stretch reads VVTVGITNYA…EKEGWLWKMT (83 aa). Lysine 60 is subject to N6-lipoyllysine.

This sequence belongs to the GcvH family. In terms of assembly, the glycine cleavage system is composed of four proteins: P, T, L and H. (R)-lipoate serves as cofactor.

In terms of biological role, the glycine cleavage system catalyzes the degradation of glycine. The H protein shuttles the methylamine group of glycine from the P protein to the T protein. This chain is Glycine cleavage system H protein, found in Bartonella quintana (strain Toulouse) (Rochalimaea quintana).